The primary structure comprises 1805 residues: Obscurin-like protein 1 (1805 aa).

The residue at position 10 (serine 10) is a Phosphoserine. In terms of domain architecture, Ig-like 1 spans 12–100 (PCFLRFPRPV…GEAYAAAAVT (89 aa)). The tract at residues 17–19 (FPR) is interaction with TTN. Cysteine 33 and cysteine 84 are oxidised to a cystine. The segment at 85–94 (RARNAAGEAY) is interaction with TTN. A compositionally biased stretch (pro residues) spans 104–122 (PPAPEPEPQSSECPPPPPG). Residues 104 to 131 (PPAPEPEPQSSECPPPPPGTGEGAPVFL) are disordered. Ig-like domains lie at 128–225 (PVFL…ALLQ), 240–330 (PPVR…QTLS), and 339–425 (PRLR…ANVT). 3 disulfides stabilise this stretch: cysteine 149–cysteine 209, cysteine 267–cysteine 319, and cysteine 362–cysteine 412. In terms of domain architecture, Fibronectin type-III spans 517 to 615 (PPGPPVLVEM…FNGSAHLVPT (99 aa)). 10 consecutive Ig-like domains span residues 720–800 (PQDK…FSVT), 804–891 (PPVH…FTVT), 902–982 (PNGK…FTIT), 986–1075 (PPVR…VTVT), 1078–1165 (PERI…FNVS), 1176–1261 (PEAV…FNVQ), 1266–1351 (PPVK…ARLH), 1355–1442 (TELL…ARLS), 1536–1628 (PVTI…REVS), and 1702–1798 (PAQS…ADTQ). 6 disulfides stabilise this stretch: cysteine 738–cysteine 788, cysteine 829–cysteine 879, cysteine 920–cysteine 970, cysteine 1011–cysteine 1061, cysteine 1103–cysteine 1153, and cysteine 1195–cysteine 1245. Cysteine 1558 and cysteine 1608 are oxidised to a cystine.

In terms of assembly, component of the 3M complex, composed of core components CUL7, CCDC8 and OBSL1. Interacts with CCDC8. Interacts with CUL7; the interaction is direct. Interacts with FBXW8. Interacts (via N-terminal Ig-like domain) with TTN/titin (via C-terminal Ig-like domain); the interaction is direct. As to expression, expressed in granule neurons, with levels decreasing with neuronal maturation.

It localises to the cytoplasm. It is found in the perinuclear region. Its subcellular location is the golgi apparatus. In terms of biological role, core component of the 3M complex, a complex required to regulate microtubule dynamics and genome integrity. It is unclear how the 3M complex regulates microtubules, it could act by controlling the level of a microtubule stabilizer. Acts as a regulator of the Cul7-RING(FBXW8) ubiquitin-protein ligase, playing a critical role in the ubiquitin ligase pathway that regulates Golgi morphogenesis and dendrite patterning in brain. Required to localize CUL7 to the Golgi apparatus in neurons. In Rattus norvegicus (Rat), this protein is Obscurin-like protein 1 (Obsl1).